Here is a 1520-residue protein sequence, read N- to C-terminus: DNA-directed RNA polymerase subunit beta'' (1520 aa).

Residues C220, C296, C303, and C306 each contribute to the Zn(2+) site. Composition is skewed to basic and acidic residues over residues 645–654 (TREEEYRTRE) and 664–674 (PENKYRTREGE). 2 disordered regions span residues 645 to 676 (TREE…GEGE) and 705 to 786 (YRTL…KKEG). Acidic residues-rich tracts occupy residues 730–748 (GEYE…SSED) and 756–779 (TLEE…PEED).

It belongs to the RNA polymerase beta' chain family. RpoC2 subfamily. In plastids the minimal PEP RNA polymerase catalytic core is composed of four subunits: alpha, beta, beta', and beta''. When a (nuclear-encoded) sigma factor is associated with the core the holoenzyme is formed, which can initiate transcription. Zn(2+) is required as a cofactor.

The protein resides in the plastid. The protein localises to the chloroplast. It catalyses the reaction RNA(n) + a ribonucleoside 5'-triphosphate = RNA(n+1) + diphosphate. Its function is as follows. DNA-dependent RNA polymerase catalyzes the transcription of DNA into RNA using the four ribonucleoside triphosphates as substrates. In Sorghum bicolor (Sorghum), this protein is DNA-directed RNA polymerase subunit beta''.